The sequence spans 296 residues: Nucleotide-binding protein SMU_1306c (296 aa).

13–20 is an ATP binding site; sequence GMSGAGKT. Position 63–66 (63–66) interacts with GTP; sequence DMRS.

It belongs to the RapZ-like family.

Displays ATPase and GTPase activities. In Streptococcus mutans serotype c (strain ATCC 700610 / UA159), this protein is Nucleotide-binding protein SMU_1306c.